The following is a 1414-amino-acid chain: DNA-directed RNA polymerase subunit beta' (1414 aa).

Residues C70, C72, C85, and C88 each contribute to the Zn(2+) site. Positions 460, 462, and 464 each coordinate Mg(2+). Positions 815, 889, 896, and 899 each coordinate Zn(2+). A disordered region spans residues 1395 to 1414; that stretch reads EAEAQFADVSSTPDSDTDAS.

The protein belongs to the RNA polymerase beta' chain family. As to quaternary structure, the RNAP catalytic core consists of 2 alpha, 1 beta, 1 beta' and 1 omega subunit. When a sigma factor is associated with the core the holoenzyme is formed, which can initiate transcription. Mg(2+) serves as cofactor. Zn(2+) is required as a cofactor.

The enzyme catalyses RNA(n) + a ribonucleoside 5'-triphosphate = RNA(n+1) + diphosphate. Its function is as follows. DNA-dependent RNA polymerase catalyzes the transcription of DNA into RNA using the four ribonucleoside triphosphates as substrates. This is DNA-directed RNA polymerase subunit beta' from Janthinobacterium sp. (strain Marseille) (Minibacterium massiliensis).